Reading from the N-terminus, the 77-residue chain is MGSFSIWHWLVVLAIVVLVFGTKKLRNLGSDLGGAVRGFKEGMKGAEEENTQPPPSHQQVTGHSIKSEIEEKDQTKV.

The helical transmembrane segment at 1–21 threads the bilayer; that stretch reads MGSFSIWHWLVVLAIVVLVFG. The tract at residues 40-77 is disordered; that stretch reads KEGMKGAEEENTQPPPSHQQVTGHSIKSEIEEKDQTKV. The segment covering 65-77 has biased composition (basic and acidic residues); sequence IKSEIEEKDQTKV.

The protein belongs to the TatA/E family. The Tat system comprises two distinct complexes: a TatABC complex, containing multiple copies of TatA, TatB and TatC subunits, and a separate TatA complex, containing only TatA subunits. Substrates initially bind to the TatABC complex, which probably triggers association of the separate TatA complex to form the active translocon.

The protein resides in the cell inner membrane. In terms of biological role, part of the twin-arginine translocation (Tat) system that transports large folded proteins containing a characteristic twin-arginine motif in their signal peptide across membranes. TatA could form the protein-conducting channel of the Tat system. The sequence is that of Sec-independent protein translocase protein TatA from Nitrosomonas eutropha (strain DSM 101675 / C91 / Nm57).